Consider the following 396-residue polypeptide: Elongation factor Tu (396 aa).

Positions Lys-10–Val-206 constitute a tr-type G domain. Positions Gly-19–Thr-26 are G1. Gly-19–Thr-26 serves as a coordination point for GTP. Thr-26 lines the Mg(2+) pocket. Positions Gly-60–Ser-64 are G2. A G3 region spans residues Asp-81 to Gly-84. GTP-binding positions include Asp-81–His-85 and Asn-136–Asp-139. The interval Asn-136–Asp-139 is G4. The interval Ser-174–Leu-176 is G5.

It belongs to the TRAFAC class translation factor GTPase superfamily. Classic translation factor GTPase family. EF-Tu/EF-1A subfamily. As to quaternary structure, monomer.

It is found in the cytoplasm. The enzyme catalyses GTP + H2O = GDP + phosphate + H(+). GTP hydrolase that promotes the GTP-dependent binding of aminoacyl-tRNA to the A-site of ribosomes during protein biosynthesis. The sequence is that of Elongation factor Tu from Legionella pneumophila (strain Lens).